Here is a 145-residue protein sequence, read N- to C-terminus: Ribonuclease P protein component (145 aa).

A disordered region spans residues 121-145 (PAAAGTMPPARTVHPSSLSPTEPEL). The segment covering 134 to 145 (HPSSLSPTEPEL) has biased composition (polar residues).

The protein belongs to the RnpA family. In terms of assembly, consists of a catalytic RNA component (M1 or rnpB) and a protein subunit.

It carries out the reaction Endonucleolytic cleavage of RNA, removing 5'-extranucleotides from tRNA precursor.. RNaseP catalyzes the removal of the 5'-leader sequence from pre-tRNA to produce the mature 5'-terminus. It can also cleave other RNA substrates such as 4.5S RNA. The protein component plays an auxiliary but essential role in vivo by binding to the 5'-leader sequence and broadening the substrate specificity of the ribozyme. This chain is Ribonuclease P protein component, found in Xanthomonas axonopodis pv. citri (strain 306).